Here is a 176-residue protein sequence, read N- to C-terminus: Large ribosomal subunit protein uL10 (176 aa).

The protein belongs to the universal ribosomal protein uL10 family. As to quaternary structure, part of the ribosomal stalk of the 50S ribosomal subunit. The N-terminus interacts with L11 and the large rRNA to form the base of the stalk. The C-terminus forms an elongated spine to which L12 dimers bind in a sequential fashion forming a multimeric L10(L12)X complex.

Its function is as follows. Forms part of the ribosomal stalk, playing a central role in the interaction of the ribosome with GTP-bound translation factors. The polypeptide is Large ribosomal subunit protein uL10 (Nocardia farcinica (strain IFM 10152)).